The following is a 4963-amino-acid chain: Kettin homolog (4963 aa).

Ig-like domains follow at residues 18-105 (PTFI…TCIL), 133-220 (PSAP…EAIS), and 303-392 (PIIR…ARIE). Disordered stretches follow at residues 396–420 (LSVPDERRKENQLREQQERDRQQQQ), 466–501 (RRQLEHEKRLRQQQQQQLFEREKSEKEERARLEEER), 557–578 (IRPHQQQQQHYQQQQQSPRQEV), 598–622 (QLYQHQHQQHQQQQQQPQEQQQQRF), and 652–696 (TNGG…GHEH). Composition is skewed to basic and acidic residues over residues 399-417 (PDERRKENQLREQQERDRQ), 466-475 (RRQLEHEKRL), and 484-501 (FEREKSEKEERARLEEER). A coiled-coil region spans residues 401–517 (ERRKENQLRE…KHLRQQQQTQ (117 aa)). The span at 557–576 (IRPHQQQQQHYQQQQQSPRQ) shows a compositional bias: low complexity. Positions 658–685 (AANGSAKTANGSANGSANGSAVHAANGG) are enriched in low complexity. Ig-like domains are found at residues 706–796 (PQFL…FSLN), 806–893 (PEFT…GRVV), 937–1027 (PKFE…ANIA), 1065–1155 (PNFH…ATII), 1199–1281 (FHCE…AELT), 1462–1554 (PKFL…ITVT), 1594–1687 (PPTF…ATIR), 1728–1819 (PAFV…VDIN), 1992–2085 (PPVF…IFLE), 2126–2217 (PTFT…CTVK), 2258–2350 (PKFV…ANFT), 2391–2481 (PQFI…AQLT), 2522–2613 (PKFV…GQLS), 2654–2745 (PSFV…ANVG), 2787–2878 (PQWV…ATVT), 2919–3010 (PNFL…ASIR), 3051–3141 (PAIT…ATLK), 3182–3273 (PRFI…ATIE), 3314–3407 (PAIV…FEVS), and 3448–3539 (PVFI…TKLT). C827 and C877 are joined by a disulfide. The cysteines at positions 1201 and 1265 are disulfide-linked. C1618 and C1671 are joined by a disulfide. Cystine bridges form between C2016–C2069 and C2148–C2201. Residues 3567–3583 (EAPRPAREDAPDADHGP) are compositionally biased toward basic and acidic residues. Positions 3567-3590 (EAPRPAREDAPDADHGPPKFTSAL) are disordered. 5 consecutive Ig-like domains span residues 3584 to 3677 (PKFT…LKVV), 3720 to 3811 (PSFS…GKIA), 3821 to 3913 (PQVV…TKIT), 3962 to 4052 (PEFR…AKLA), and 4098 to 4185 (PQFT…ATLD). Intrachain disulfides connect C3606/C3659 and C3742/C3795. The interval 4193 to 4963 (RQTKLRPANF…TSQAKLTLSR (771 aa)) is required for F-actin binding. Residues 4319-4329 (DQQEVGWERPD) show a composition bias toward basic and acidic residues. The segment at 4319 to 4357 (DQQEVGWERPDWAGQDGTSKLPGADEGRFKKLPTPAPEL) is disordered. 4 consecutive Ig-like domains span residues 4546 to 4634 (PTIS…ANLT), 4645 to 4733 (PDFS…ARLN), 4752 to 4842 (PRFT…LVLT), and 4872 to 4960 (PHFI…AKLT).

As to quaternary structure, interacts (via Ig-like domains) with F-actin. Expressed in the pharyngeal, body wall, and anal depressor muscles. Expression in these muscles is higher in hermaphrodites than in males. Expressed in the vulva and the myoepithelial sheath of the proximal ovary. Expressed in the proximal gonad of males. Not expressed in the dense bodies of the obliquely striated body wall muscle.

It localises to the cytoplasm. It is found in the myofibril. Its subcellular location is the sarcomere. The protein resides in the cytoskeleton. In terms of biological role, positively regulates actin filament organization and provides mechanical stability to the myofibrils during body wall muscle contraction. Required for the organization of sarcomeric actin filaments and myosin protein myo-3 in striated body wall muscle cells. Not required for assembly of dense bodies, which are a type of integrin-based adhesion structure that link the plasma membrane to thin filaments of myofibrils, in body wall muscle. Not required for the atn-1 protein to localize to the dense bodies. This Caenorhabditis elegans protein is Kettin homolog.